A 176-amino-acid polypeptide reads, in one-letter code: ATP-dependent protease subunit HslV (176 aa).

Threonine 5 is an active-site residue. Na(+)-binding residues include serine 161, cysteine 164, and threonine 167.

The protein belongs to the peptidase T1B family. HslV subfamily. As to quaternary structure, a double ring-shaped homohexamer of HslV is capped on each side by a ring-shaped HslU homohexamer. The assembly of the HslU/HslV complex is dependent on binding of ATP.

Its subcellular location is the cytoplasm. It catalyses the reaction ATP-dependent cleavage of peptide bonds with broad specificity.. Allosterically activated by HslU binding. Functionally, protease subunit of a proteasome-like degradation complex believed to be a general protein degrading machinery. The chain is ATP-dependent protease subunit HslV from Desulfitobacterium hafniense (strain DSM 10664 / DCB-2).